A 285-amino-acid chain; its full sequence is Guanylate kinase 2, chloroplastic/mitochondrial (285 aa).

Residues 1–19 (MLLTRRFSSALARSPLLPR) show a composition bias toward low complexity. The transit peptide at 1-42 (MLLTRRFSSALARSPLLPRSLPPPRAVPATPPAPRPPPRRLM) directs the protein to the chloroplast and mitochondrion. A disordered region spans residues 1-66 (MLLTRRFSSA…PPPPSGADKD (66 aa)). The span at 20–36 (SLPPPRAVPATPPAPRP) shows a compositional bias: pro residues. The segment covering 40-50 (RLMSSSSSGWH) has biased composition (low complexity). The Guanylate kinase-like domain occupies 91–272 (PMILVISGPS…AVKQVESIID (182 aa)). Position 98-105 (98-105 (GPSGVGKD)) interacts with ATP. Active-site residues include arginine 130, arginine 224, and arginine 235. Asparagine 255 is an ATP binding site.

It belongs to the guanylate kinase family. As to quaternary structure, monomer.

The protein localises to the plastid. It localises to the chloroplast. The protein resides in the mitochondrion. It catalyses the reaction GMP + ATP = GDP + ADP. In terms of biological role, essential for recycling GMP and indirectly, cGMP. Essential for chloroplast differentiation at early stage of leaf development. May not be involved in the synthesis and maintenance of the organellar DNA during leaf development. The chain is Guanylate kinase 2, chloroplastic/mitochondrial (V2) from Oryza sativa subsp. japonica (Rice).